The following is a 485-amino-acid chain: Glutamate--tRNA ligase (485 aa).

The 'HIGH' region signature appears at 12 to 22; it reads PSPTGYMHVGN. Residues Cys109, Cys111, Cys136, and His138 each contribute to the Zn(2+) site. Positions 253–257 match the 'KMSKS' region motif; it reads KLSKR. Residue Lys256 coordinates ATP.

The protein belongs to the class-I aminoacyl-tRNA synthetase family. Glutamate--tRNA ligase type 1 subfamily. As to quaternary structure, monomer. It depends on Zn(2+) as a cofactor.

It is found in the cytoplasm. It carries out the reaction tRNA(Glu) + L-glutamate + ATP = L-glutamyl-tRNA(Glu) + AMP + diphosphate. Its function is as follows. Catalyzes the attachment of glutamate to tRNA(Glu) in a two-step reaction: glutamate is first activated by ATP to form Glu-AMP and then transferred to the acceptor end of tRNA(Glu). In Clostridium botulinum (strain Eklund 17B / Type B), this protein is Glutamate--tRNA ligase.